Here is a 470-residue protein sequence, read N- to C-terminus: Siroheme synthase (470 aa).

Residues 1 to 213 (MSDATDPGWF…GEHAAARQVL (213 aa)) are precorrin-2 dehydrogenase /sirohydrochlorin ferrochelatase. NAD(+) is bound by residues 28–29 (GI) and 49–50 (PR). Positions 224–470 (GEVWLVGAGP…VVTPPPLSGT (247 aa)) are uroporphyrinogen-III C-methyltransferase. Pro233 serves as a coordination point for S-adenosyl-L-methionine. The active-site Proton acceptor is the Asp256. Lys278 (proton donor) is an active-site residue. S-adenosyl-L-methionine-binding positions include 309-311 (GGD), Ile314, 339-340 (TA), Met392, and Gly421.

In the N-terminal section; belongs to the precorrin-2 dehydrogenase / sirohydrochlorin ferrochelatase family. The protein in the C-terminal section; belongs to the precorrin methyltransferase family.

The catalysed reaction is uroporphyrinogen III + 2 S-adenosyl-L-methionine = precorrin-2 + 2 S-adenosyl-L-homocysteine + H(+). The enzyme catalyses precorrin-2 + NAD(+) = sirohydrochlorin + NADH + 2 H(+). It carries out the reaction siroheme + 2 H(+) = sirohydrochlorin + Fe(2+). It functions in the pathway cofactor biosynthesis; adenosylcobalamin biosynthesis; precorrin-2 from uroporphyrinogen III: step 1/1. Its pathway is cofactor biosynthesis; adenosylcobalamin biosynthesis; sirohydrochlorin from precorrin-2: step 1/1. The protein operates within porphyrin-containing compound metabolism; siroheme biosynthesis; precorrin-2 from uroporphyrinogen III: step 1/1. It participates in porphyrin-containing compound metabolism; siroheme biosynthesis; siroheme from sirohydrochlorin: step 1/1. It functions in the pathway porphyrin-containing compound metabolism; siroheme biosynthesis; sirohydrochlorin from precorrin-2: step 1/1. Its function is as follows. Multifunctional enzyme that catalyzes the SAM-dependent methylations of uroporphyrinogen III at position C-2 and C-7 to form precorrin-2 via precorrin-1. Then it catalyzes the NAD-dependent ring dehydrogenation of precorrin-2 to yield sirohydrochlorin. Finally, it catalyzes the ferrochelation of sirohydrochlorin to yield siroheme. The sequence is that of Siroheme synthase from Gluconacetobacter diazotrophicus (strain ATCC 49037 / DSM 5601 / CCUG 37298 / CIP 103539 / LMG 7603 / PAl5).